Consider the following 84-residue polypeptide: Limulin (84 aa).

A Pentraxin (PTX) domain is found at 6–84; that stretch reads ITSKVKFPPS…DEQGDFLFNV (79 aa). The Ca(2+) site is built by aspartate 67 and asparagine 68.

It belongs to the pentraxin family. In terms of assembly, homopentamer. Pentraxin (or pentaxin) have a discoid arrangement of 5 non-covalently bound subunits. Ca(2+) serves as cofactor. A disulfide bond links Cys-38 to a Cys in the C-terminal half of the chain of 163 residues.

Functionally, lectin that binds sialic acid. Displays antiviral activity and therefore may contribute to defense against infections. The polypeptide is Limulin (Limulus polyphemus (Atlantic horseshoe crab)).